We begin with the raw amino-acid sequence, 441 residues long: Xylose isomerase (441 aa).

Catalysis depends on residues His105 and Asp108. Residues Glu236, Glu272, His275, Asp300, Asp311, Asp313, and Asp343 each coordinate Mg(2+).

Belongs to the xylose isomerase family. As to quaternary structure, homotetramer. The cofactor is Mg(2+).

It localises to the cytoplasm. It carries out the reaction alpha-D-xylose = alpha-D-xylulofuranose. The polypeptide is Xylose isomerase (Mesorhizobium japonicum (strain LMG 29417 / CECT 9101 / MAFF 303099) (Mesorhizobium loti (strain MAFF 303099))).